A 451-amino-acid polypeptide reads, in one-letter code: UPF0761 membrane protein Hhal_0704 (451 aa).

The next 6 helical transmembrane spans lie at 66-86 (LLAI…FPVF), 122-142 (ELTA…LNTI), 162-182 (FMVY…SVAS), 204-224 (LLNL…YSLV), 228-248 (SVPV…FELA), and 268-288 (ALAA…VILI).

The protein belongs to the UPF0761 family.

Its subcellular location is the cell inner membrane. The protein is UPF0761 membrane protein Hhal_0704 of Halorhodospira halophila (strain DSM 244 / SL1) (Ectothiorhodospira halophila (strain DSM 244 / SL1)).